The sequence spans 125 residues: PCNA-associated factor (125 aa).

Positions 1 to 125 are disordered; the sequence is MVRTKADSAG…SEEAADSDDE (125 aa). Positions 8 to 17 are enriched in low complexity; it reads SAGSSASSGS. A D-box motif is present at residues 28–39; the sequence is RKTFGSSSSGSN. The short motif at 68 to 79 is the PIP-box element; that stretch reads QKGIGEFFGSPS. Residues 85–87 carry the KEN box motif; the sequence is KEN. The Initiation motif motif lies at 95–107; sequence EAGGSGAGKAPRK. A compositionally biased stretch (acidic residues) spans 115–125; that stretch reads PSEEAADSDDE.

As to quaternary structure, interacts with pcna.

The protein localises to the nucleus. It localises to the cytoplasm. It is found in the perinuclear region. Its function is as follows. PCNA-binding protein that acts as a regulator of DNA repair during DNA replication. Following DNA damage, the interaction with pcna is disrupted, facilitating the interaction between monoubiquitinated pcna and the translesion DNA synthesis DNA polymerase eta (polh) at stalled replisomes, facilitating the bypass of replication-fork-blocking lesions. Also acts as a regulator of centrosome number. This chain is PCNA-associated factor, found in Xenopus tropicalis (Western clawed frog).